The following is a 365-amino-acid chain: 3-dehydroquinate synthase (365 aa).

Residues 75–80 (DAESGK), 109–113 (GAATD), 133–134 (TT), lysine 146, and lysine 155 contribute to the NAD(+) site. The Zn(2+) site is built by glutamate 188, histidine 253, and histidine 269.

Belongs to the sugar phosphate cyclases superfamily. Dehydroquinate synthase family. NAD(+) serves as cofactor. Co(2+) is required as a cofactor. Requires Zn(2+) as cofactor.

The protein localises to the cytoplasm. The enzyme catalyses 7-phospho-2-dehydro-3-deoxy-D-arabino-heptonate = 3-dehydroquinate + phosphate. Its pathway is metabolic intermediate biosynthesis; chorismate biosynthesis; chorismate from D-erythrose 4-phosphate and phosphoenolpyruvate: step 2/7. Catalyzes the conversion of 3-deoxy-D-arabino-heptulosonate 7-phosphate (DAHP) to dehydroquinate (DHQ). This chain is 3-dehydroquinate synthase, found in Corynebacterium efficiens (strain DSM 44549 / YS-314 / AJ 12310 / JCM 11189 / NBRC 100395).